We begin with the raw amino-acid sequence, 246 residues long: UDP-N-acetyl-D-mannosaminuronic acid transferase (246 aa).

It belongs to the glycosyltransferase 26 family.

The catalysed reaction is UDP-N-acetyl-alpha-D-mannosaminouronate + N-acetyl-alpha-D-glucosaminyl-di-trans,octa-cis-undecaprenyl diphosphate = beta-D-ManNAcA-(1-&gt;4)-alpha-D-GlcNAc-di-trans,octa-cis-undecaprenyl diphosphate + UDP + H(+). Its pathway is bacterial outer membrane biogenesis; enterobacterial common antigen biosynthesis. Functionally, catalyzes the synthesis of Und-PP-GlcNAc-ManNAcA (Lipid II), the second lipid-linked intermediate involved in enterobacterial common antigen (ECA) synthesis. The sequence is that of UDP-N-acetyl-D-mannosaminuronic acid transferase from Salmonella dublin (strain CT_02021853).